The chain runs to 333 residues: Taste receptor type 2 member 38 (333 aa).

The Extracellular portion of the chain corresponds to 1-17; that stretch reads MLTLTHICTVSYEVRST. The chain crosses the membrane as a helical span at residues 18 to 38; that stretch reads FLFISVLEFAVGFLTNAFISL. The Cytoplasmic segment spans residues 39 to 55; sequence VNFWDVVKRQPLSNSDC. A helical transmembrane segment spans residues 56–76; it reads VLLCLSISRLFLHGLLFLSAI. Topologically, residues 77-94 are extracellular; the sequence is QLTHFQKLSEPLNHSYQV. Residues 95–115 traverse the membrane as a helical segment; it reads ILMLWMIANQANLWLAACLSL. Topologically, residues 116-142 are cytoplasmic; sequence LYCSKLIRFSHTFLICLASWVSRKISQ. Residues 143-163 traverse the membrane as a helical segment; the sequence is MLLGIILCSCICTVLCVWCFF. At 164-190 the chain is on the extracellular side; sequence GRLHFTVTTVLFMNNNTRLNWQIKDLN. N-linked (GlcNAc...) asparagine glycosylation is present at N178. The chain crosses the membrane as a helical span at residues 191–211; the sequence is LFYSFLFCYLWSVPPFLLFLV. Residues 212-251 are Cytoplasmic-facing; it reads SSGMLTVSLGRHMRTMKVYTRDSRDPSLEAHIKALKSLVS. Residues 252–272 form a helical membrane-spanning segment; that stretch reads FFCFFVISSCAAFISVPLLIL. At 273–276 the chain is on the extracellular side; sequence WHDK. A helical transmembrane segment spans residues 277-297; that stretch reads IGVMVCVGIMAACPSGHAAVL. At 298-333 the chain is on the cytoplasmic side; that stretch reads ISGNAKLRRAVTTILLWAQSSLKVRADHMADSRTLC.

Belongs to the G-protein coupled receptor T2R family.

It localises to the membrane. Receptor that may play a role in the perception of bitterness and is gustducin-linked. May play a role in sensing the chemical composition of the gastrointestinal content. The activity of this receptor may stimulate alpha gustducin, mediate PLC-beta-2 activation and lead to the gating of TRPM5. The sequence is that of Taste receptor type 2 member 38 (TAS2R38) from Papio hamadryas (Hamadryas baboon).